The following is a 284-amino-acid chain: tRNA-cytidine(32) 2-sulfurtransferase (284 aa).

The PP-loop motif motif lies at 45–50 (SGGKDS). Residues cysteine 120, cysteine 123, and cysteine 211 each contribute to the [4Fe-4S] cluster site.

This sequence belongs to the TtcA family. In terms of assembly, homodimer. Requires Mg(2+) as cofactor. It depends on [4Fe-4S] cluster as a cofactor.

The protein resides in the cytoplasm. The enzyme catalyses cytidine(32) in tRNA + S-sulfanyl-L-cysteinyl-[cysteine desulfurase] + AH2 + ATP = 2-thiocytidine(32) in tRNA + L-cysteinyl-[cysteine desulfurase] + A + AMP + diphosphate + H(+). Its pathway is tRNA modification. Functionally, catalyzes the ATP-dependent 2-thiolation of cytidine in position 32 of tRNA, to form 2-thiocytidine (s(2)C32). The sulfur atoms are provided by the cysteine/cysteine desulfurase (IscS) system. The sequence is that of tRNA-cytidine(32) 2-sulfurtransferase from Alcanivorax borkumensis (strain ATCC 700651 / DSM 11573 / NCIMB 13689 / SK2).